The primary structure comprises 549 residues: Cytoplasmic trehalase (549 aa).

Residues arginine 168, 175-176, asparagine 212, 221-223, 292-294, and glycine 324 each bind substrate; these read WD, RSQ, and RDE. Catalysis depends on proton donor/acceptor residues aspartate 326 and glutamate 509. Substrate is bound at residue glutamate 525.

The protein belongs to the glycosyl hydrolase 37 family. As to quaternary structure, monomer.

The protein resides in the cytoplasm. It carries out the reaction alpha,alpha-trehalose + H2O = alpha-D-glucose + beta-D-glucose. The protein operates within glycan degradation; trehalose degradation; D-glucose from alpha,alpha-trehalose: step 1/1. Hydrolyzes trehalose to glucose. Could be involved, in cells returning to low osmolarity conditions, in the utilization of the accumulated cytoplasmic trehalose, which was synthesized in response to high osmolarity. The sequence is that of Cytoplasmic trehalase from Escherichia coli O81 (strain ED1a).